A 377-amino-acid polypeptide reads, in one-letter code: MSNGIVIIGSGFAARQLVKNIRKQDTGIPLTLIAADSMDEYNKPDLSHVISQGQRADDLTRQTAGEFAEQFNLRLFPHTWVTDIDAEAHVVKSQNNQWQYDKLVLATGANAFVPPVPGRELMLTLNSQQEYRACETQLRDARRVLIVGGGLIGSELAMDFCRAGKAVTLIDNAASILASLMPPEVSSRLQHRLTEMGVHLLLKSQLQGLEKTNSGILATLDRQRSTEVDAVIAATGLRPETALARRAGLTINRGVCVDSYLQTSNADIYALGDCAEINGQVLPFLQPIQLSAMVLAKNLLGNNTPLKLPAMLVKIKTPELPLHLAGETQRRDLRWQICTESQGMVARGVDDADQLRAFVVSEDRMKEAFGLLKTLPM.

This sequence belongs to the FAD-dependent oxidoreductase family. Requires FAD as cofactor.

It is found in the cytoplasm. The catalysed reaction is 2 reduced [nitric oxide reductase rubredoxin domain] + NAD(+) + H(+) = 2 oxidized [nitric oxide reductase rubredoxin domain] + NADH. The protein operates within nitrogen metabolism; nitric oxide reduction. In terms of biological role, one of at least two accessory proteins for anaerobic nitric oxide (NO) reductase. Reduces the rubredoxin moiety of NO reductase. In Escherichia fergusonii (strain ATCC 35469 / DSM 13698 / CCUG 18766 / IAM 14443 / JCM 21226 / LMG 7866 / NBRC 102419 / NCTC 12128 / CDC 0568-73), this protein is Nitric oxide reductase FlRd-NAD(+) reductase.